The sequence spans 552 residues: Oxygen-dependent choline dehydrogenase (552 aa).

7 to 36 (DYIIIGAGSAGNVLAARLTEDKDTTVLLLE) lines the FAD pocket. His477 (proton acceptor) is an active-site residue.

Belongs to the GMC oxidoreductase family. FAD serves as cofactor.

The enzyme catalyses choline + A = betaine aldehyde + AH2. It catalyses the reaction betaine aldehyde + NAD(+) + H2O = glycine betaine + NADH + 2 H(+). The protein operates within amine and polyamine biosynthesis; betaine biosynthesis via choline pathway; betaine aldehyde from choline (cytochrome c reductase route): step 1/1. Functionally, involved in the biosynthesis of the osmoprotectant glycine betaine. Catalyzes the oxidation of choline to betaine aldehyde and betaine aldehyde to glycine betaine at the same rate. The chain is Oxygen-dependent choline dehydrogenase from Acinetobacter baumannii (strain AB307-0294).